Here is a 372-residue protein sequence, read N- to C-terminus: GTPase Obg (372 aa).

Residues 1 to 159 enclose the Obg domain; sequence MKFIDEARIE…RMLKLELKVL (159 aa). Positions 128–147 are disordered; the sequence is LHFKSSTNRAPRQKTDGKPG. One can recognise an OBG-type G domain in the interval 160-334; it reads ADVGLLGMPN…LVYAIHDYLV (175 aa). Residues 166-173, 191-195, 213-216, 284-287, and 315-317 contribute to the GTP site; these read GMPNAGKS, FTTLA, DIPG, NKLD, and SAL. Mg(2+) is bound by residues Ser-173 and Thr-193.

Belongs to the TRAFAC class OBG-HflX-like GTPase superfamily. OBG GTPase family. Monomer. It depends on Mg(2+) as a cofactor.

It localises to the cytoplasm. Its function is as follows. An essential GTPase which binds GTP, GDP and possibly (p)ppGpp with moderate affinity, with high nucleotide exchange rates and a fairly low GTP hydrolysis rate. Plays a role in control of the cell cycle, stress response, ribosome biogenesis and in those bacteria that undergo differentiation, in morphogenesis control. The chain is GTPase Obg from Burkholderia mallei (strain NCTC 10247).